The following is a 240-amino-acid chain: Superoxide dismutase [Cu-Zn] (240 aa).

The first 32 residues, Met-1–Ala-32, serve as a signal peptide directing secretion. A lipid anchor (N-palmitoyl cysteine) is attached at Cys-33. Residue Cys-33 is the site of S-diacylglycerol cysteine attachment. 2 stretches are compositionally biased toward polar residues: residues Pro-36–Thr-51 and Gly-68–Thr-77. The interval Pro-36–Thr-77 is disordered. Positions 116 and 118 each coordinate Cu cation. Cys-123 and Cys-234 are joined by a disulfide. His-146 and Asp-158 together coordinate Zn(2+). Residue His-195 coordinates Cu cation.

Belongs to the Cu-Zn superoxide dismutase family. Requires Cu cation as cofactor. Zn(2+) is required as a cofactor.

Its subcellular location is the cell membrane. The catalysed reaction is 2 superoxide + 2 H(+) = H2O2 + O2. With respect to regulation, inhibited by the copper chelator diethyl dithiocarbamate. In terms of biological role, destroys radicals which are normally produced within the cells and which are toxic to biological systems. May play a role in favoring mycobacterial survival in phagocytes. This chain is Superoxide dismutase [Cu-Zn] (sodC), found in Mycobacterium bovis (strain ATCC BAA-935 / AF2122/97).